A 347-amino-acid polypeptide reads, in one-letter code: MDENKKRALSVALSQIEKQFGKGSVMRMGDRVIEAVEAIPTGSLMLDLALGIGGLPKGRVVEIYGPESSGKTTLTLQAIAQCQKKGGTAAFIDAEHALDPIYAGKLGVNVDDLLLSQPDTGEQALEIADMLVRSGSIDIMVIDSVAALTPKAEIEGEMGDQLPGLQARLMSQALRKLTGNIKRSNTLVIFINQLRMKIGIMMPGQSPETTTGGNALKFYASVRLDIRRIGAIKKGDEIIGNQTKIKVVKNKLAPPFKQVVTEILYGEGISREGELIEMGVEAKLVEKAGAWYSYGGERIGQGKDNARGYLRENPHLAAKLEADLREKFEPTELSREEGDEDTLEDAM.

Residue 65–72 (GPESSGKT) participates in ATP binding. The segment covering 327 to 336 (KFEPTELSRE) has biased composition (basic and acidic residues). Residues 327 to 347 (KFEPTELSREEGDEDTLEDAM) form a disordered region. Residues 337–347 (EGDEDTLEDAM) show a composition bias toward acidic residues.

This sequence belongs to the RecA family.

Its subcellular location is the cytoplasm. Functionally, can catalyze the hydrolysis of ATP in the presence of single-stranded DNA, the ATP-dependent uptake of single-stranded DNA by duplex DNA, and the ATP-dependent hybridization of homologous single-stranded DNAs. It interacts with LexA causing its activation and leading to its autocatalytic cleavage. This chain is Protein RecA, found in Xylella fastidiosa (strain M12).